A 264-amino-acid chain; its full sequence is MFECRIDGQFFKKLFETLKDICTEVNLECDENGIKMQSMDCSHVSLVDLNIVSDFFQHYRCDKNCVLGISINFMLKILSVIKEKSTVFLFKEDNENDAVLNIGIIDEEEQSSADDSLEIQVKLINAQKEHLEIPQSEYHCQCTMKSKKFQEFTKYLNSIGDNVSISMKKDAMILSTTGSDIKVTKQFTNDMTDISITCTKSVSQEFATRYLVMFSRASSLSDEVLISLSPHIPISIKFNFKQQLTDLQDPSHLTFFLAPKIGDY.

The protein belongs to the PCNA family. Homotrimer. Oligomer. Interacts with ORC1 (via PIP-box motif). Interacts with FEN1.

Its subcellular location is the nucleus. The protein localises to the chromosome. It is found in the cytoplasm. Functionally, may be involved in DNA damage response. Appears not to be involved in DNA replication in trophozoites. In Plasmodium falciparum (isolate 3D7), this protein is Proliferating cell nuclear antigen 2.